Consider the following 333-residue polypeptide: MSTLVESPVPSNDSQAAAPAAYDPTQKQKSQAKTARIPIKVVAAEKLKKPEWIRVRAAAPGSRFYDIKRILREHNLHTVCEEASCPNIGECFGKGTATFMIMGDKCTRRCPFCDVGHGRPDPLDTQEPENLARTIAALKLSYVVITSVDRDDLRDGGAAHFVECIAKVREYSPDTRIEVLVPDFRGRLDRALHILNSGPPDVMNHNLETVPRLYKQARPGSDYAHSLKLLAEFKKLHPEVPTKSGLMLGLGETDEEILQVMRDMREHNVDMLTIGQYLQPSEHHLPVLRYVHPDTFAMFEREAYAMGFTHAAVGAMVRSSYHADQQAHAAGVN.

Residues 1 to 15 are compositionally biased toward polar residues; that stretch reads MSTLVESPVPSNDSQ. The segment at 1 to 34 is disordered; that stretch reads MSTLVESPVPSNDSQAAAPAAYDPTQKQKSQAKT. The [4Fe-4S] cluster site is built by Cys-80, Cys-85, Cys-91, Cys-106, Cys-110, Cys-113, and Ser-320. The Radical SAM core domain maps to 91 to 309; it reads CFGKGTATFM…EREAYAMGFT (219 aa).

The protein belongs to the radical SAM superfamily. Lipoyl synthase family. [4Fe-4S] cluster is required as a cofactor.

The protein localises to the cytoplasm. The catalysed reaction is [[Fe-S] cluster scaffold protein carrying a second [4Fe-4S](2+) cluster] + N(6)-octanoyl-L-lysyl-[protein] + 2 oxidized [2Fe-2S]-[ferredoxin] + 2 S-adenosyl-L-methionine + 4 H(+) = [[Fe-S] cluster scaffold protein] + N(6)-[(R)-dihydrolipoyl]-L-lysyl-[protein] + 4 Fe(3+) + 2 hydrogen sulfide + 2 5'-deoxyadenosine + 2 L-methionine + 2 reduced [2Fe-2S]-[ferredoxin]. It functions in the pathway protein modification; protein lipoylation via endogenous pathway; protein N(6)-(lipoyl)lysine from octanoyl-[acyl-carrier-protein]: step 2/2. Catalyzes the radical-mediated insertion of two sulfur atoms into the C-6 and C-8 positions of the octanoyl moiety bound to the lipoyl domains of lipoate-dependent enzymes, thereby converting the octanoylated domains into lipoylated derivatives. This Bordetella bronchiseptica (strain ATCC BAA-588 / NCTC 13252 / RB50) (Alcaligenes bronchisepticus) protein is Lipoyl synthase.